Here is a 355-residue protein sequence, read N- to C-terminus: Serpentine receptor class epsilon-1 (355 aa).

7 consecutive transmembrane segments (helical) span residues phenylalanine 28–isoleucine 48, leucine 56–isoleucine 76, isoleucine 102–valine 122, isoleucine 144–leucine 164, valine 172–phenylalanine 192, valine 232–serine 252, and phenylalanine 268–serine 288.

The protein belongs to the nematode receptor-like protein sre family.

It localises to the membrane. The protein is Serpentine receptor class epsilon-1 (sre-1) of Caenorhabditis elegans.